An 81-amino-acid chain; its full sequence is Photosystem I iron-sulfur center (81 aa).

4Fe-4S ferredoxin-type domains lie at 2-31 (AHSV…MIPW) and 39-68 (IASA…VRVY). Residues cysteine 11, cysteine 14, cysteine 17, cysteine 21, cysteine 48, cysteine 51, cysteine 54, and cysteine 58 each coordinate [4Fe-4S] cluster.

As to quaternary structure, the eukaryotic PSI reaction center is composed of at least 11 subunits. Requires [4Fe-4S] cluster as cofactor.

The protein resides in the plastid. The protein localises to the chloroplast thylakoid membrane. The enzyme catalyses reduced [plastocyanin] + hnu + oxidized [2Fe-2S]-[ferredoxin] = oxidized [plastocyanin] + reduced [2Fe-2S]-[ferredoxin]. Functionally, apoprotein for the two 4Fe-4S centers FA and FB of photosystem I (PSI); essential for photochemical activity. FB is the terminal electron acceptor of PSI, donating electrons to ferredoxin. The C-terminus interacts with PsaA/B/D and helps assemble the protein into the PSI complex. Required for binding of PsaD and PsaE to PSI. PSI is a plastocyanin-ferredoxin oxidoreductase, converting photonic excitation into a charge separation, which transfers an electron from the donor P700 chlorophyll pair to the spectroscopically characterized acceptors A0, A1, FX, FA and FB in turn. This chain is Photosystem I iron-sulfur center, found in Pinus thunbergii (Japanese black pine).